Here is a 383-residue protein sequence, read N- to C-terminus: Succinyl-diaminopimelate desuccinylase (383 aa).

His-70 serves as a coordination point for Zn(2+). Asp-72 is an active-site residue. Zn(2+) is bound at residue Asp-103. Glu-137 acts as the Proton acceptor in catalysis. The Zn(2+) site is built by Glu-138, Glu-166, and His-352.

Belongs to the peptidase M20A family. DapE subfamily. Homodimer. The cofactor is Zn(2+). Co(2+) serves as cofactor.

The catalysed reaction is N-succinyl-(2S,6S)-2,6-diaminopimelate + H2O = (2S,6S)-2,6-diaminopimelate + succinate. Its pathway is amino-acid biosynthesis; L-lysine biosynthesis via DAP pathway; LL-2,6-diaminopimelate from (S)-tetrahydrodipicolinate (succinylase route): step 3/3. In terms of biological role, catalyzes the hydrolysis of N-succinyl-L,L-diaminopimelic acid (SDAP), forming succinate and LL-2,6-diaminopimelate (DAP), an intermediate involved in the bacterial biosynthesis of lysine and meso-diaminopimelic acid, an essential component of bacterial cell walls. This Hahella chejuensis (strain KCTC 2396) protein is Succinyl-diaminopimelate desuccinylase.